The chain runs to 160 residues: Transcription elongation factor GreA (160 aa).

The stretch at A53–N73 forms a coiled coil.

It belongs to the GreA/GreB family.

Its function is as follows. Necessary for efficient RNA polymerase transcription elongation past template-encoded arresting sites. The arresting sites in DNA have the property of trapping a certain fraction of elongating RNA polymerases that pass through, resulting in locked ternary complexes. Cleavage of the nascent transcript by cleavage factors such as GreA or GreB allows the resumption of elongation from the new 3'terminus. GreA releases sequences of 2 to 3 nucleotides. The chain is Transcription elongation factor GreA from Pseudomonas putida (strain ATCC 47054 / DSM 6125 / CFBP 8728 / NCIMB 11950 / KT2440).